We begin with the raw amino-acid sequence, 237 residues long: Ribonuclease 3 (237 aa).

In terms of domain architecture, RNase III spans 4–133 (LTELEKSLGV…VLAAIYLDKG (130 aa)). Residue Glu46 participates in Mg(2+) binding. Catalysis depends on residues Asp50 and Glu122. Residue Glu122 coordinates Mg(2+). In terms of domain architecture, DRBM spans 160–229 (DYKSRLQELV…AKEALQQFEN (70 aa)).

The protein belongs to the ribonuclease III family. Homodimer. Mg(2+) serves as cofactor.

The protein localises to the cytoplasm. It catalyses the reaction Endonucleolytic cleavage to 5'-phosphomonoester.. Functionally, digests double-stranded RNA. Involved in the processing of primary rRNA transcript to yield the immediate precursors to the large and small rRNAs (23S and 16S). Processes some mRNAs, and tRNAs when they are encoded in the rRNA operon. Processes pre-crRNA and tracrRNA of type II CRISPR loci if present in the organism. In Dehalococcoides mccartyi (strain ATCC BAA-2266 / KCTC 15142 / 195) (Dehalococcoides ethenogenes (strain 195)), this protein is Ribonuclease 3.